A 371-amino-acid polypeptide reads, in one-letter code: Antibiotic efflux pump periplasmic linker protein ArpA (371 aa).

The first 22 residues, 1 to 22, serve as a signal peptide directing secretion; it reads MQFKPAVTALVSAVALATLLSG. The N-palmitoyl cysteine moiety is linked to residue Cys-23. Residue Cys-23 is the site of S-diacylglycerol cysteine attachment. Positions 115-155 form a coiled coil; sequence LAERYKQLIDEQAVSKQEYDDANAKRLQAEASLKSAQIDLR.

Belongs to the membrane fusion protein (MFP) (TC 8.A.1) family.

It is found in the cell inner membrane. The periplasmic linker protein component of an antibiotic efflux pump. Confers resistance to numerous structurally unrelated antibiotics such as carbenicillin, chloramphenicol, erythromycin, novobiocin, streptomycin and tetracycline. Is not involved in organic solvent efflux. This Pseudomonas putida (Arthrobacter siderocapsulatus) protein is Antibiotic efflux pump periplasmic linker protein ArpA (arpA).